The primary structure comprises 354 residues: Uroporphyrinogen decarboxylase (354 aa).

Substrate is bound by residues 27–31, aspartate 77, tyrosine 154, threonine 209, and histidine 327; that span reads RQAGR.

It belongs to the uroporphyrinogen decarboxylase family. In terms of assembly, homodimer.

It is found in the cytoplasm. It carries out the reaction uroporphyrinogen III + 4 H(+) = coproporphyrinogen III + 4 CO2. Its pathway is porphyrin-containing compound metabolism; protoporphyrin-IX biosynthesis; coproporphyrinogen-III from 5-aminolevulinate: step 4/4. Catalyzes the decarboxylation of four acetate groups of uroporphyrinogen-III to yield coproporphyrinogen-III. This chain is Uroporphyrinogen decarboxylase, found in Pseudomonas putida (strain W619).